Here is a 224-residue protein sequence, read N- to C-terminus: Probable molybdenum cofactor guanylyltransferase (224 aa).

GTP contacts are provided by residues L20–G22, K33, D88, and D117. Residue D117 participates in Mg(2+) binding.

It belongs to the MobA family. The cofactor is Mg(2+).

The protein localises to the cytoplasm. It catalyses the reaction Mo-molybdopterin + GTP + H(+) = Mo-molybdopterin guanine dinucleotide + diphosphate. Transfers a GMP moiety from GTP to Mo-molybdopterin (Mo-MPT) cofactor (Moco or molybdenum cofactor) to form Mo-molybdopterin guanine dinucleotide (Mo-MGD) cofactor. This chain is Probable molybdenum cofactor guanylyltransferase, found in Methanosarcina mazei (strain ATCC BAA-159 / DSM 3647 / Goe1 / Go1 / JCM 11833 / OCM 88) (Methanosarcina frisia).